The primary structure comprises 69 residues: UPF0150 protein Ta0767 (69 aa).

The protein belongs to the UPF0150 family.

The polypeptide is UPF0150 protein Ta0767 (Thermoplasma acidophilum (strain ATCC 25905 / DSM 1728 / JCM 9062 / NBRC 15155 / AMRC-C165)).